The primary structure comprises 128 residues: Fluoride-specific ion channel FluC (128 aa).

4 consecutive transmembrane segments (helical) span residues 5 to 25, 34 to 54, 67 to 87, and 99 to 119; these read LFIS…GLLF, FGTL…LGLF, FLIT…SEVV, and FCVL…GIWI. 2 residues coordinate Na(+): Gly74 and Thr77.

It belongs to the fluoride channel Fluc/FEX (TC 1.A.43) family.

The protein resides in the cell inner membrane. The catalysed reaction is fluoride(in) = fluoride(out). With respect to regulation, na(+) is not transported, but it plays an essential structural role and its presence is essential for fluoride channel function. Fluoride-specific ion channel. Important for reducing fluoride concentration in the cell, thus reducing its toxicity. This chain is Fluoride-specific ion channel FluC, found in Haemophilus influenzae (strain PittGG).